The following is a 306-amino-acid chain: UPF0282 protein Pars_1056 (306 aa).

The protein belongs to the UPF0282 family.

This Pyrobaculum arsenaticum (strain DSM 13514 / JCM 11321 / PZ6) protein is UPF0282 protein Pars_1056.